The chain runs to 172 residues: uncharacterized protein (172 aa).

Disordered stretches follow at residues 1–54 (MPRR…GGSS) and 82–111 (ITGG…SVPE). Positions 14–29 (AAPARSASTAAALPPR) are enriched in low complexity. The segment covering 30–47 (TMAPPPAPSRVQQAPPPT) has biased composition (pro residues). Residues 89 to 109 (SGSNNAPADTSVPQSSYSNSV) show a composition bias toward polar residues.

This is an uncharacterized protein from Schizosaccharomyces pombe (strain 972 / ATCC 24843) (Fission yeast).